A 181-amino-acid polypeptide reads, in one-letter code: c-Myc-binding protein homolog (181 aa).

Residues 111 to 127 (ESTEAAEQQQQQQQQEN) show a composition bias toward low complexity. Disordered stretches follow at residues 111-145 (ESTE…VAEI) and 159-181 (VVTT…GSSE). A compositionally biased stretch (polar residues) spans 168–181 (PSPTVQAEASGSSE).

It belongs to the AMY1 family.

The protein resides in the nucleus. The sequence is that of c-Myc-binding protein homolog from Drosophila melanogaster (Fruit fly).